A 402-amino-acid chain; its full sequence is Heat stress transcription factor A-6a (402 aa).

A disordered region spans residues 1–28 (MLKPQTPRARRAAHPNSHMASSSSSSSL). Positions 212–258 (EVVSLKRDRAALRAEVIMLKQQYNACKSQLIAMEEMVRNIERRQQQT) form a coiled coil. The segment at 216–266 (LKRDRAALRAEVIMLKQQYNACKSQLIAMEEMVRNIERRQQQTIGFFAKVL) is hydrophobic repeat HR-A/B. A Nuclear localization signal motif is present at residues 290–293 (KRQR). Positions 349-358 (DDVWEELDAL) match the AHA motif.

This sequence belongs to the HSF family. Class A subfamily. In terms of assembly, homotrimer. In terms of processing, exhibits temperature-dependent phosphorylation.

The protein localises to the nucleus. Functionally, transcriptional regulator that specifically binds DNA of heat shock promoter elements (HSE). In Oryza sativa subsp. japonica (Rice), this protein is Heat stress transcription factor A-6a (HSFA6B).